A 154-amino-acid polypeptide reads, in one-letter code: Nuclear cap-binding protein subunit 2 (154 aa).

The interval 1–23 (MSTSVDLSSYRDQHFKGSRSEQE) is disordered. Over residues 9-23 (SYRDQHFKGSRSEQE) the composition is skewed to basic and acidic residues. MRNA-binding positions include tyrosine 10, tyrosine 33, 102-106 (RVDWD), 113-117 (RQYGR), and 123-124 (QV). The RRM domain maps to 30 to 108 (TTLYVGNLSF…RLIRVDWDAG (79 aa)).

The protein belongs to the RRM NCBP2 family. In terms of assembly, component of the nuclear cap-binding complex (CBC), a heterodimer composed of Cbp80 and Cbp20 that interacts with m7GpppG-capped RNA. Interacts with Ars2.

It localises to the nucleus. Its function is as follows. Component of the cap-binding complex (CBC), which binds co-transcriptionally to the 5' cap of pre-mRNAs and is involved in various processes such as pre-mRNA splicing and RNA-mediated gene silencing (RNAi). The CBC complex is involved in miRNA-mediated RNA interference via its interaction with Ars2 and is required for primary microRNAs (miRNAs) processing. Also involved in innate immunity via the short interfering RNAs (siRNAs) processing machinery by restricting the viral RNA production. In the CBC complex, Cbp20 recognizes and binds capped RNAs (m7GpppG-capped RNA) but requires Cbp80 to stabilize the movement of its N-terminal loop and lock the CBC into a high affinity cap-binding state with the cap structure. The chain is Nuclear cap-binding protein subunit 2 (Cbp20) from Drosophila ananassae (Fruit fly).